The following is a 126-amino-acid chain: S-adenosylmethionine decarboxylase proenzyme (126 aa).

Ser63 (schiff-base intermediate with substrate; via pyruvic acid) is an active-site residue. A Pyruvic acid (Ser); by autocatalysis modification is found at Ser63. His68 serves as the catalytic Proton acceptor; for processing activity. Residue Cys83 is the Proton donor; for catalytic activity of the active site.

It belongs to the prokaryotic AdoMetDC family. Type 1 subfamily. Heterotetramer of two alpha and two beta chains arranged as a dimer of alpha/beta heterodimers. The cofactor is pyruvate. Post-translationally, is synthesized initially as an inactive proenzyme. Formation of the active enzyme involves a self-maturation process in which the active site pyruvoyl group is generated from an internal serine residue via an autocatalytic post-translational modification. Two non-identical subunits are generated from the proenzyme in this reaction, and the pyruvate is formed at the N-terminus of the alpha chain, which is derived from the carboxyl end of the proenzyme. The post-translation cleavage follows an unusual pathway, termed non-hydrolytic serinolysis, in which the side chain hydroxyl group of the serine supplies its oxygen atom to form the C-terminus of the beta chain, while the remainder of the serine residue undergoes an oxidative deamination to produce ammonia and the pyruvoyl group blocking the N-terminus of the alpha chain.

It catalyses the reaction S-adenosyl-L-methionine + H(+) = S-adenosyl 3-(methylsulfanyl)propylamine + CO2. It participates in amine and polyamine biosynthesis; S-adenosylmethioninamine biosynthesis; S-adenosylmethioninamine from S-adenosyl-L-methionine: step 1/1. In terms of biological role, catalyzes the decarboxylation of S-adenosylmethionine to S-adenosylmethioninamine (dcAdoMet), the propylamine donor required for the synthesis of the polyamines spermine and spermidine from the diamine putrescine. The sequence is that of S-adenosylmethionine decarboxylase proenzyme from Pelotomaculum thermopropionicum (strain DSM 13744 / JCM 10971 / SI).